The sequence spans 501 residues: GDP-fucose protein O-fucosyltransferase 4 (501 aa).

The Cytoplasmic portion of the chain corresponds to 1–10; sequence MLLQMAGRGK. The helical; Signal-anchor for type II membrane protein transmembrane segment at 11–31 threads the bilayer; sequence MVPCVCLGLLGVLCWVWVSFA. The Lumenal segment spans residues 32 to 501; sequence SFPDEQLSLG…MAVRRARGKN (470 aa). Asn-173 carries N-linked (GlcNAc...) asparagine glycosylation. An intrachain disulfide couples Cys-396 to Cys-399. Asn-428 and Asn-478 each carry an N-linked (GlcNAc...) asparagine glycan.

The protein belongs to the glycosyltransferase 10 family.

The protein localises to the endoplasmic reticulum membrane. The catalysed reaction is L-threonyl-[protein] + GDP-beta-L-fucose = 3-O-(alpha-L-fucosyl)-L-threonyl-[protein] + GDP + H(+). It catalyses the reaction L-seryl-[protein] + GDP-beta-L-fucose = 3-O-(alpha-L-fucosyl)-L-seryl-[protein] + GDP + H(+). Its pathway is protein modification; protein glycosylation. Protein O-fucosyltransferase that specifically catalyzes O-fucosylation of serine or threonine residues in EMI domains of target proteins. Attaches fucose through an O-glycosidic linkage. O-fucosylation of EMI domain-containing proteins may be required for facilitating protein folding and secretion. The chain is GDP-fucose protein O-fucosyltransferase 4 (fut11) from Takifugu rubripes (Japanese pufferfish).